We begin with the raw amino-acid sequence, 387 residues long: Alkanesulfonate monooxygenase (387 aa).

It belongs to the SsuD family.

The enzyme catalyses an alkanesulfonate + FMNH2 + O2 = an aldehyde + FMN + sulfite + H2O + 2 H(+). Catalyzes the desulfonation of aliphatic sulfonates. The sequence is that of Alkanesulfonate monooxygenase from Ralstonia nicotianae (strain ATCC BAA-1114 / GMI1000) (Ralstonia solanacearum).